A 311-amino-acid polypeptide reads, in one-letter code: Hevamine-A (311 aa).

The signal sequence occupies residues 1–26 (MAKRTQAILLLLLAISLIMSSSHVDG). Residues 27–302 (GGIAIYWGQN…SSILDSVLFL (276 aa)) form the GH18 domain. Cystine bridges form between Cys-46–Cys-93 and Cys-76–Cys-83. The active-site Proton donor is Glu-153. The cysteines at positions 185 and 214 are disulfide-linked. The propeptide at 300–311 (LFLHSEECMTVL) is removed in mature form.

The protein belongs to the glycosyl hydrolase 18 family. Chitinase class II subfamily.

It localises to the vacuole. The enzyme catalyses Random endo-hydrolysis of N-acetyl-beta-D-glucosaminide (1-&gt;4)-beta-linkages in chitin and chitodextrins.. It catalyses the reaction Hydrolysis of (1-&gt;4)-beta-linkages between N-acetylmuramic acid and N-acetyl-D-glucosamine residues in a peptidoglycan and between N-acetyl-D-glucosamine residues in chitodextrins.. Its function is as follows. Bifunctional enzyme with lysozyme / chitinase activity. May have a role in plugging the latex vessel and cessation of latex flow. The protein is Hevamine-A of Hevea brasiliensis (Para rubber tree).